The chain runs to 443 residues: UDP-N-acetylmuramate--L-alanine ligase (443 aa).

111–117 contributes to the ATP binding site; the sequence is GAHGKTS.

The protein belongs to the MurCDEF family.

Its subcellular location is the cytoplasm. The enzyme catalyses UDP-N-acetyl-alpha-D-muramate + L-alanine + ATP = UDP-N-acetyl-alpha-D-muramoyl-L-alanine + ADP + phosphate + H(+). Its pathway is cell wall biogenesis; peptidoglycan biosynthesis. Its function is as follows. Cell wall formation. The sequence is that of UDP-N-acetylmuramate--L-alanine ligase from Ligilactobacillus salivarius (strain UCC118) (Lactobacillus salivarius).